Consider the following 547-residue polypeptide: MTQNSYKIPIQGMTCTGCEEHVTEALEQAGAKDVSADFRRGEAIFELSDDQIEKAKQNISAAGYQPGEEESQPSENSVDFNRDGDYDLLIIGSGGAAFSAAIKANENGAKVAMVERGTVGGTCVNIGCVPSKTMLRAGEINGLAQNNPFTGLQTSTGAADLAQLTEQKDGLVSQMRQEKYIDLIEEYGFDLIRGEASFIDDKTIQVNGQNITSKSFLIATGASPAVPEIPGMNEVDYLTSTSALELKEVPQRLAVIGSGYIAAELGQMFHNLGTEVTLMQRSERLFKTYDPEISEAIDESLTEQGLNLITGVTYQKVEQNGKSTSIYIEVNGQEQVIEADQVLVATGRKPNTETLNLESAGVKTGKKGEVLTNEYLQTSNNRIYAAGDVTLGPQFVYVAAYEGGIVANNALGLAKRKIDLRFVPGVTFTNPSIATVGLTEQQAKEKGYDVKTSVLPLDAVPRALVNHETTGVYKLVVNAQTQKLIGAHIVSENAGDVIYAATLAVQFGLTIEDLTDSFAPYLTMAEGLKLAALTFDKDVSKLSCCAG.

Residues 4-67 (NSYKIPIQGM…NISAAGYQPG (64 aa)) form the HMA domain. Residues cysteine 15 and cysteine 18 each contribute to the a metal cation site. Positions 97, 117, and 122 each coordinate FAD. Cysteine 123 and cysteine 128 form a disulfide bridge. The FAD site is built by lysine 132, alanine 196, aspartate 388, and valine 396. Cysteine 544 and cysteine 545 together coordinate Hg(2+).

This sequence belongs to the class-I pyridine nucleotide-disulfide oxidoreductase family. In terms of assembly, homodimer. Requires FAD as cofactor.

The catalysed reaction is Hg + NADP(+) + H(+) = Hg(2+) + NADPH. In terms of biological role, resistance to Hg(2+) in bacteria appears to be governed by a specialized system which includes mercuric reductase. MerA protein is responsible for volatilizing mercury as Hg(0). The chain is Mercuric reductase (merA) from Staphylococcus aureus.